The chain runs to 239 residues: Sugar fermentation stimulation protein homolog (239 aa).

The protein belongs to the SfsA family.

This is Sugar fermentation stimulation protein homolog from Cyanothece sp. (strain PCC 7425 / ATCC 29141).